Consider the following 990-residue polypeptide: Serine/threonine-protein kinase ATG1 (990 aa).

In terms of domain architecture, Protein kinase spans 15-334 (FVIENEIGKG…FDDFFASPVI (320 aa)). Residues 21-29 (IGKGSFAVV) and lysine 44 each bind ATP. Catalysis depends on aspartate 165, which acts as the Proton acceptor. Over residues 375–408 (VSSIEASTQQPGVQPPVSTATSPPALESRSTQEA) the composition is skewed to polar residues. 5 disordered regions span residues 375-499 (VSSI…GGED), 529-566 (SRLG…TILS), 579-614 (ASTG…QGGQ), 750-784 (LSQE…SSSS), and 970-990 (SPVG…TESP). Low complexity-rich tracts occupy residues 529–554 (SRLG…SAPG) and 587–613 (PPGS…RQGG). The span at 750–771 (LSQELDSSTATSGISPSRNSVQ) shows a compositional bias: polar residues. The span at 772-784 (GSARRVGSISSSS) shows a compositional bias: low complexity.

The protein belongs to the protein kinase superfamily. Ser/Thr protein kinase family. APG1/unc-51/ULK1 subfamily. As to quaternary structure, homodimer. Forms a ternary complex with ATG13 and ATG17.

It localises to the cytoplasm. The protein resides in the preautophagosomal structure membrane. The enzyme catalyses L-seryl-[protein] + ATP = O-phospho-L-seryl-[protein] + ADP + H(+). The catalysed reaction is L-threonyl-[protein] + ATP = O-phospho-L-threonyl-[protein] + ADP + H(+). In terms of biological role, serine/threonine protein kinase involved in the cytoplasm to vacuole transport (Cvt) and found to be essential in autophagy, where it is required for the formation of autophagosomes. Involved in the clearance of protein aggregates which cannot be efficiently cleared by the proteasome. Required for selective autophagic degradation of the nucleus (nucleophagy) as well as for mitophagy which contributes to regulate mitochondrial quantity and quality by eliminating the mitochondria to a basal level to fulfill cellular energy requirements and preventing excess ROS production. Also involved in endoplasmic reticulum-specific autophagic process, in selective removal of ER-associated degradation (ERAD) substrates. Plays a key role in ATG9 and ATG23 cycling through the pre-autophagosomal structure and is necessary to promote ATG18 binding to ATG9 through phosphorylation of ATG9. Catalyzes phosphorylation of ATG4, decreasing the interaction between ATG4 and ATG8 and impairing deconjugation of PE-conjugated forms of ATG8. Required for wild-type budding of haploid sporidia and for complete symptom development during pathogenic growth such as gall formation and teliospore production in ears of mature maize. This Mycosarcoma maydis (Corn smut fungus) protein is Serine/threonine-protein kinase ATG1.